Consider the following 681-residue polypeptide: Transmembrane protein 214-A (681 aa).

Disordered stretches follow at residues 1 to 41 and 58 to 99; these read MASG…GTAP and KKQN…GSRQ. N300 and N324 each carry an N-linked (GlcNAc...) asparagine glycan. The next 2 helical transmembrane spans lie at 471–491 and 608–628; these read GFPW…FVFY and LLLH…EAAV.

This sequence belongs to the TMEM214 family. Constitutively interacts with CASP4; required for the localization of procaspase 4 to the ER.

The protein resides in the endoplasmic reticulum membrane. Critical mediator, in cooperation with CASP4, of endoplasmic reticulum-stress induced apoptosis. Required or the activation of CASP4 following endoplasmic reticulum stress. This Xenopus laevis (African clawed frog) protein is Transmembrane protein 214-A (tmem214-a).